The chain runs to 357 residues: UDP-N-acetylglucosamine--N-acetylmuramyl-(pentapeptide) pyrophosphoryl-undecaprenol N-acetylglucosamine transferase (357 aa).

Residues Thr-15–Gly-17, Asn-124, Arg-165, Ser-194, and Gln-288 each bind UDP-N-acetyl-alpha-D-glucosamine.

The protein belongs to the glycosyltransferase 28 family. MurG subfamily.

Its subcellular location is the cell inner membrane. The enzyme catalyses di-trans,octa-cis-undecaprenyl diphospho-N-acetyl-alpha-D-muramoyl-L-alanyl-D-glutamyl-meso-2,6-diaminopimeloyl-D-alanyl-D-alanine + UDP-N-acetyl-alpha-D-glucosamine = di-trans,octa-cis-undecaprenyl diphospho-[N-acetyl-alpha-D-glucosaminyl-(1-&gt;4)]-N-acetyl-alpha-D-muramoyl-L-alanyl-D-glutamyl-meso-2,6-diaminopimeloyl-D-alanyl-D-alanine + UDP + H(+). Its pathway is cell wall biogenesis; peptidoglycan biosynthesis. Cell wall formation. Catalyzes the transfer of a GlcNAc subunit on undecaprenyl-pyrophosphoryl-MurNAc-pentapeptide (lipid intermediate I) to form undecaprenyl-pyrophosphoryl-MurNAc-(pentapeptide)GlcNAc (lipid intermediate II). The polypeptide is UDP-N-acetylglucosamine--N-acetylmuramyl-(pentapeptide) pyrophosphoryl-undecaprenol N-acetylglucosamine transferase (Trichormus variabilis (strain ATCC 29413 / PCC 7937) (Anabaena variabilis)).